Reading from the N-terminus, the 149-residue chain is Large ribosomal subunit protein bL9 (149 aa).

The protein belongs to the bacterial ribosomal protein bL9 family.

Functionally, binds to the 23S rRNA. This chain is Large ribosomal subunit protein bL9, found in Helicobacter pylori (strain J99 / ATCC 700824) (Campylobacter pylori J99).